A 108-amino-acid chain; its full sequence is UPF0145 protein LACR_1006 (108 aa).

It belongs to the UPF0145 family.

This chain is UPF0145 protein LACR_1006, found in Lactococcus lactis subsp. cremoris (strain SK11).